The chain runs to 452 residues: Probable ECA polymerase (452 aa).

11 helical membrane passes run 6–26 (FSGLLVVWLLSTLFIATLTWF), 37–57 (VFFSLLFLLTFFFGFPLTSVL), 63–83 (VGVAPPEILLQALLSAACFYG), 118–138 (VILMGIALVSVGIFFMHNGFL), 155–175 (GVALKRFFYFFIPAMLVVYFL), 181–201 (AWLFFLVSTVAFGLLTYMIVG), 207–227 (IIIAFAIFLFIGIIRGWISLW), 228–248 (MLAAAGVLGIVGMFWLALKRY), 341–361 (LVVMGGALFIPLGAIVVGLII), 378–398 (YKAAILHSFCFGAIFNMIVLA), and 410–430 (VFFLVVFGASLLVAKLLFWLF).

Belongs to the WzyE family. Probably part of a complex composed of WzxE, WzyE and WzzE.

The protein localises to the cell inner membrane. Its pathway is bacterial outer membrane biogenesis; enterobacterial common antigen biosynthesis. In terms of biological role, probably involved in the polymerization of enterobacterial common antigen (ECA) trisaccharide repeat units. In Salmonella arizonae (strain ATCC BAA-731 / CDC346-86 / RSK2980), this protein is Probable ECA polymerase.